The chain runs to 960 residues: Phosphoenolpyruvate carboxylase 2 (960 aa).

Active-site residues include His-167 and Lys-595.

This sequence belongs to the PEPCase type 1 family. In terms of assembly, homotetramer. Mg(2+) is required as a cofactor.

Its subcellular location is the cytoplasm. The catalysed reaction is oxaloacetate + phosphate = phosphoenolpyruvate + hydrogencarbonate. It participates in photosynthesis; C3 acid pathway. Its function is as follows. Through the carboxylation of phosphoenolpyruvate (PEP) it forms oxaloacetate, a four-carbon dicarboxylic acid source for the tricarboxylic acid cycle. This chain is Phosphoenolpyruvate carboxylase 2, found in Sorghum bicolor (Sorghum).